The following is a 60-amino-acid chain: Large ribosomal subunit protein bL32 (60 aa).

The disordered stretch occupies residues 1–60; the sequence is MAVQQVKKSRSKRDMRRSHDSLTNPTLSTDKSTGELHLRHHVSPNGFYKGRKVVDTKSED. The span at 7–16 shows a compositional bias: basic residues; that stretch reads KKSRSKRDMR. Positions 22–31 are enriched in polar residues; it reads LTNPTLSTDK.

It belongs to the bacterial ribosomal protein bL32 family.

In Francisella tularensis subsp. holarctica (strain LVS), this protein is Large ribosomal subunit protein bL32.